Consider the following 100-residue polypeptide: NADH-quinone oxidoreductase subunit K (100 aa).

Helical transmembrane passes span 4-24, 29-49, and 60-80; these read LSNYLIVSAVLFSIGTIGVLT, IVVFMCIELMLNAVNLTFVAF, and IFVFFIMTVAAAEAAVGLALF.

It belongs to the complex I subunit 4L family. In terms of assembly, NDH-1 is composed of 14 different subunits. Subunits NuoA, H, J, K, L, M, N constitute the membrane sector of the complex.

The protein localises to the cell inner membrane. The catalysed reaction is a quinone + NADH + 5 H(+)(in) = a quinol + NAD(+) + 4 H(+)(out). Its function is as follows. NDH-1 shuttles electrons from NADH, via FMN and iron-sulfur (Fe-S) centers, to quinones in the respiratory chain. The immediate electron acceptor for the enzyme in this species is believed to be ubiquinone. Couples the redox reaction to proton translocation (for every two electrons transferred, four hydrogen ions are translocated across the cytoplasmic membrane), and thus conserves the redox energy in a proton gradient. This is NADH-quinone oxidoreductase subunit K from Trichlorobacter lovleyi (strain ATCC BAA-1151 / DSM 17278 / SZ) (Geobacter lovleyi).